A 309-amino-acid chain; its full sequence is Ribonuclease Z (309 aa).

7 residues coordinate Zn(2+): H63, H65, D67, H68, H145, D216, and H274. The active-site Proton acceptor is D67.

It belongs to the RNase Z family. As to quaternary structure, homodimer. Requires Zn(2+) as cofactor.

It carries out the reaction Endonucleolytic cleavage of RNA, removing extra 3' nucleotides from tRNA precursor, generating 3' termini of tRNAs. A 3'-hydroxy group is left at the tRNA terminus and a 5'-phosphoryl group is left at the trailer molecule.. Its function is as follows. Zinc phosphodiesterase, which displays some tRNA 3'-processing endonuclease activity. Probably involved in tRNA maturation, by removing a 3'-trailer from precursor tRNA. This Streptococcus pneumoniae serotype 19F (strain G54) protein is Ribonuclease Z.